Consider the following 194-residue polypeptide: Cysteine and glycine-rich protein 3 (194 aa).

Positions 1–5 (MPNWG) are interaction with TCAP. The LIM zinc-binding 1 domain maps to 10–61 (CGACEKTVYHAEEIQCNGRSFHKTCFHCMACRKALDSTTVAAHESEIYCKVC). Positions 64–69 (RRYGPK) match the Nuclear localization signal motif. The tract at residues 94–105 (QSPKPARSVTTS) is interaction with CLF2 and isoform 2. Serine 95 and serine 153 each carry phosphoserine. Residues 120 to 171 (CPRCGKSVYAAEKVMGGGKPWHKTCFRCAICGKSLESTNVTDKDGELYCKVC) enclose the LIM zinc-binding 2 domain.

In terms of assembly, self-associates. Oligomeric in the cytoplasm and monomeric in the nucleus. Homooligomers preferentially form along the actin cytoskeleton. Isoform 2 interacts with isoform 1. Isoform 1 but not isoform 2 interacts with MYOD1 and MYOG. Isoform 1 interacts with TCAP, ACTN2 and NRAP. Isoform 2 interacts with TCAP and alpha-actinin. Interacts with LDHD. Interacts (via N-terminus)with GLRX3 (via C-terminus) and PPP3CA; GLRX3 and calcineurin compete for interaction with CSRP3. Interacts with MYF6. Interacts with CFL2; the stoichiometry influences F-actin depolymerization and possibly two molecules of CFL2 can interact with one molecule of CSRP3 resulting in the highest functional impact; the interaction is stronger with phosphorylated CFL2. Post-translationally, phosphorylated by PKC/PRKCA. As to expression, cardiac and slow-twitch skeletal muscles. Isoform 2 is expressed in striated muscle. Isoform 2 is specifically expressed at higher levels in patients with neuromuscular diseases, such as limb-girdle muscular dystrophy 2A (LGMD2A), Duchenne muscular dystrophy (DMD) and dermatomyositis.

The protein resides in the nucleus. It is found in the cytoplasm. It localises to the cytoskeleton. Its subcellular location is the myofibril. The protein localises to the sarcomere. The protein resides in the z line. Its function is as follows. Positive regulator of myogenesis. Acts as a cofactor for myogenic bHLH transcription factors such as MYOD1, and probably MYOG and MYF6. Enhances the DNA-binding activity of the MYOD1:TCF3 isoform E47 complex and may promote formation of a functional MYOD1:TCF3 isoform E47:MEF2A complex involved in myogenesis. Plays a crucial and specific role in the organization of cytosolic structures in cardiomyocytes. Could play a role in mechanical stretch sensing. May be a scaffold protein that promotes the assembly of interacting proteins at Z-line structures. It is essential for calcineurin anchorage to the Z line. Required for stress-induced calcineurin-NFAT activation. The role in regulation of cytoskeleton dynamics by association with CFL2 is reported conflictingly: Shown to enhance CFL2-mediated F-actin depolymerization dependent on the CSRP3:CFL2 molecular ratio, and also shown to reduce the ability of CLF1 and CFL2 to enhance actin depolymerization. Proposed to contribute to the maintenance of muscle cell integrity through an actin-based mechanism. Can directly bind to actin filaments, cross-link actin filaments into bundles without polarity selectivity and protect them from dilution- and cofilin-mediated depolymerization; the function seems to involve its self-association. In vitro can inhibit PKC/PRKCA activity. Proposed to be involved in cardiac stress signaling by down-regulating excessive PKC/PRKCA signaling. May play a role in early sarcomere organization. Overexpression in myotubes negatively regulates myotube differentiation. By association with isoform 1 and thus changing the CSRP3 isoform 1:CFL2 stoichiometry is proposed to down-regulate CFL2-mediated F-actin depolymerization. The sequence is that of Cysteine and glycine-rich protein 3 (CSRP3) from Homo sapiens (Human).